We begin with the raw amino-acid sequence, 344 residues long: MQETLKQLETEAIAKVEAASSLKEVNDIRVQYLGKKGPITEVLRGMGKLSAEERPKMGALANEVREQIAGAIAEKNEQLEKEEVKKKLASQTIDVTLPANPIKIGARHPLTIVVEDIEDLFIGMGYTVEEGPEVETDYYNFEALNLPKEHPARDMQDSFYITEDTLLRTQTSPVQARTLEKYKGQGPVKIICPGKVYRRDSDDATHSHQFMQIEGLVVDHNISMSDLKGTLETVARKMFGEDREIRLRPSFFPFTEPSVEVDVSCFKCGGKGCSVCKGTGWIEILGAGMVHPNVLKMSGFDPETYQGFAFGMGVERIAMLKYGIDDIRHFYTNDIRFTKQFKQD.

Glu-256 contributes to the Mg(2+) binding site.

This sequence belongs to the class-II aminoacyl-tRNA synthetase family. Phe-tRNA synthetase alpha subunit type 1 subfamily. Tetramer of two alpha and two beta subunits. It depends on Mg(2+) as a cofactor.

It is found in the cytoplasm. It carries out the reaction tRNA(Phe) + L-phenylalanine + ATP = L-phenylalanyl-tRNA(Phe) + AMP + diphosphate + H(+). The sequence is that of Phenylalanine--tRNA ligase alpha subunit from Bacillus pumilus (strain SAFR-032).